A 496-amino-acid chain; its full sequence is Glycerol kinase (496 aa).

Thr-12 serves as a coordination point for ADP. Residues Thr-12, Thr-13, and Ser-14 each coordinate ATP. Thr-12 lines the sn-glycerol 3-phosphate pocket. Arg-16 contacts ADP. Positions 82, 83, and 134 each coordinate sn-glycerol 3-phosphate. Glycerol-binding residues include Arg-82, Glu-83, and Tyr-134. A Phosphohistidine; by HPr modification is found at His-230. Asp-244 is a binding site for sn-glycerol 3-phosphate. Glycerol is bound by residues Asp-244 and Gln-245. Residues Thr-266 and Gly-309 each coordinate ADP. ATP contacts are provided by Thr-266, Gly-309, Gln-313, and Gly-410. Residues Gly-410 and Asn-414 each coordinate ADP.

It belongs to the FGGY kinase family. As to quaternary structure, homotetramer and homodimer (in equilibrium). In terms of processing, the phosphoenolpyruvate-dependent sugar phosphotransferase system (PTS), including enzyme I, and histidine-containing protein (HPr) are required for the phosphorylation, which leads to the activation of the enzyme.

It catalyses the reaction glycerol + ATP = sn-glycerol 3-phosphate + ADP + H(+). The protein operates within polyol metabolism; glycerol degradation via glycerol kinase pathway; sn-glycerol 3-phosphate from glycerol: step 1/1. With respect to regulation, activated by phosphorylation and inhibited by fructose 1,6-bisphosphate (FBP). In terms of biological role, key enzyme in the regulation of glycerol uptake and metabolism. Catalyzes the phosphorylation of glycerol to yield sn-glycerol 3-phosphate. In Geobacillus kaustophilus (strain HTA426), this protein is Glycerol kinase.